Consider the following 196-residue polypeptide: Protein LIGHT-DEPENDENT SHORT HYPOCOTYLS 6 (196 aa).

The segment covering Met1 to Asp16 has biased composition (basic and acidic residues). 2 disordered regions span residues Met1–Lys36 and Ala149–Pro196. The 128-residue stretch at Arg31–Lys158 folds into the ALOG domain. The Nuclear localization signal motif lies at Lys156 to Lys160.

Belongs to the plant homeotic and developmental regulators ALOG protein family.

Its subcellular location is the nucleus. Functionally, probable transcription regulator that acts as a developmental regulator by promoting cell growth in response to light. In Arabidopsis thaliana (Mouse-ear cress), this protein is Protein LIGHT-DEPENDENT SHORT HYPOCOTYLS 6 (LSH6).